A 757-amino-acid chain; its full sequence is Dynamin-related protein DNM1 (757 aa).

One can recognise a Dynamin-type G domain in the interval 25-333 (TLDLPILAVV…LLSHIRDKLP (309 aa)). The segment at 35-42 (GSQSSGKS) is G1 motif. Residue 35–42 (GSQSSGKS) participates in GTP binding. Positions 61–63 (VTR) are G2 motif. A G3 motif region spans residues 175-178 (DLPG). GTP is bound by residues 175 to 179 (DLPGI) and 244 to 247 (TKLD). A G4 motif region spans residues 244 to 247 (TKLD). The segment at 274–277 (VNRS) is G5 motif. Residues 557–597 (SKLSQQENGQTNGINGTSSISSNIDQDSAKNSDYDDDGIDA) form a disordered region. The span at 567 to 580 (TNGINGTSSISSNI) shows a compositional bias: low complexity. At serine 629 the chain carries Phosphoserine. The GED domain occupies 670–757 (CELIKRLIVS…KAATLISNIL (88 aa)).

It belongs to the TRAFAC class dynamin-like GTPase superfamily. Dynamin/Fzo/YdjA family. Interacts with FIS1 and MDV1.

It localises to the mitochondrion outer membrane. The catalysed reaction is GTP + H2O = GDP + phosphate + H(+). Functionally, microtubule-associated force-producing protein that participates mitochondrial fission. Fission of mitochondria occurs in many cell types and constitutes an important step in mitochondria morphology, which is balanced between fusion and fission. Functions antagonistically with FZO1. The chain is Dynamin-related protein DNM1 (DNM1) from Saccharomyces cerevisiae (strain ATCC 204508 / S288c) (Baker's yeast).